Here is a 150-residue protein sequence, read N- to C-terminus: Transcriptional repressor NrdR (150 aa).

A zinc finger spans residues 3 to 33 (CPFCGGESRVLESRPASDEEAVRRRRECLAC). An ATP-cone domain is found at 48 to 138 (LIVVKKDGRR…VYREFKDLNE (91 aa)).

Belongs to the NrdR family. Zn(2+) serves as cofactor.

Its function is as follows. Negatively regulates transcription of bacterial ribonucleotide reductase nrd genes and operons by binding to NrdR-boxes. In Symbiobacterium thermophilum (strain DSM 24528 / JCM 14929 / IAM 14863 / T), this protein is Transcriptional repressor NrdR.